Consider the following 350-residue polypeptide: Beta-hexosaminidase (350 aa).

Substrate-binding positions include aspartate 73, arginine 81, arginine 148, and 178 to 179; that span reads KH. Catalysis depends on histidine 191, which acts as the Proton donor/acceptor. Residue aspartate 262 is the Nucleophile of the active site.

It belongs to the glycosyl hydrolase 3 family. NagZ subfamily.

Its subcellular location is the cytoplasm. The catalysed reaction is Hydrolysis of terminal non-reducing N-acetyl-D-hexosamine residues in N-acetyl-beta-D-hexosaminides.. The protein operates within cell wall biogenesis; peptidoglycan recycling. Plays a role in peptidoglycan recycling by cleaving the terminal beta-1,4-linked N-acetylglucosamine (GlcNAc) from peptide-linked peptidoglycan fragments, giving rise to free GlcNAc, anhydro-N-acetylmuramic acid and anhydro-N-acetylmuramic acid-linked peptides. The sequence is that of Beta-hexosaminidase from Bordetella avium (strain 197N).